The following is a 600-amino-acid chain: MDKSKIRNFSIIAHIDHGKSTLADRILELTNTVTKREMQEQLLDSMDIERERGITIKLNSVQLYYKAKDGQEYTFHLIDTPGHVDFAYEVSRSLAACEGAILVVDATQGIEAQTLANVYLAIENNLEIIPVINKVDLPSADAERVKEEIENTIGIDCSDAPLISAKTGLNVEDVLEAIVNKIPAPYDADDAKPLRALIFDSYYDKYLGVVMSIRVREGSIKVGDRIKLMANGSSYEVTELGVKNPKIVKKDQLSAGEVGWVAASIKTIKDINVGDTITTVTNSALHPLDGYKKLKPMVYCGIYPIDTNQYQDFKEALEKMELSDSSLVYEPETSQALGFGFRVGFLGLLHMEVVQERLEREYNLNLIATAPSVIYKIHLTDGTMIEIDNPAKLPDPQKIKFMEEPFVNVKIMTPKESVGDLMSLCQNKLGTYKDLQVVDDNRMMLVYDMPLAEIIFDFFNKLKSISKGYASFEYEMIGYQESQLVKMDILLNGDMVDAFSMIVNKHFAYQRGAALTKKLKELIPRQNFEVPVQATIGNKVLARETIKAYRKDVTWKLHAADKSRRKKLLNKQKEGKKKMKEIGSVEVPQEAFIAVLKLDD.

In terms of domain architecture, tr-type G spans 4-186; that stretch reads SKIRNFSIIA…AIVNKIPAPY (183 aa). Residues 16-21 and 133-136 each bind GTP; these read DHGKST and NKVD.

The protein belongs to the TRAFAC class translation factor GTPase superfamily. Classic translation factor GTPase family. LepA subfamily.

Its subcellular location is the cell membrane. The enzyme catalyses GTP + H2O = GDP + phosphate + H(+). Functionally, required for accurate and efficient protein synthesis under certain stress conditions. May act as a fidelity factor of the translation reaction, by catalyzing a one-codon backward translocation of tRNAs on improperly translocated ribosomes. Back-translocation proceeds from a post-translocation (POST) complex to a pre-translocation (PRE) complex, thus giving elongation factor G a second chance to translocate the tRNAs correctly. Binds to ribosomes in a GTP-dependent manner. The polypeptide is Elongation factor 4 (Mesoplasma florum (strain ATCC 33453 / NBRC 100688 / NCTC 11704 / L1) (Acholeplasma florum)).